The chain runs to 371 residues: Pyruvate dehydrogenase E1 component subunit alpha (371 aa).

In terms of assembly, heterodimer of an alpha and a beta chain. It depends on thiamine diphosphate as a cofactor.

It catalyses the reaction N(6)-[(R)-lipoyl]-L-lysyl-[protein] + pyruvate + H(+) = N(6)-[(R)-S(8)-acetyldihydrolipoyl]-L-lysyl-[protein] + CO2. Activity of the E1 module is inhibited by the pyruvate dehydrogenase inhibitor PdhI. Its function is as follows. The pyruvate dehydrogenase complex catalyzes the overall conversion of pyruvate to acetyl-CoA and CO(2). It contains multiple copies of three enzymatic components: pyruvate dehydrogenase (E1), dihydrolipoamide acetyltransferase (E2) and lipoamide dehydrogenase (E3). The B.subtilis PDH complex also possesses branched-chain 2-oxoacid dehydrogenase (BCDH) activity. The polypeptide is Pyruvate dehydrogenase E1 component subunit alpha (Bacillus subtilis (strain 168)).